Consider the following 635-residue polypeptide: 1-deoxy-D-xylulose-5-phosphate synthase (635 aa).

Residues His73 and Ser114–Ala116 contribute to the thiamine diphosphate site. Residue Asp146 coordinates Mg(2+). Residues Gly147–Ala148, Asn176, Tyr287, and Glu368 contribute to the thiamine diphosphate site. Asn176 is a Mg(2+) binding site.

It belongs to the transketolase family. DXPS subfamily. As to quaternary structure, homodimer. The cofactor is Mg(2+). Requires thiamine diphosphate as cofactor.

It catalyses the reaction D-glyceraldehyde 3-phosphate + pyruvate + H(+) = 1-deoxy-D-xylulose 5-phosphate + CO2. The protein operates within metabolic intermediate biosynthesis; 1-deoxy-D-xylulose 5-phosphate biosynthesis; 1-deoxy-D-xylulose 5-phosphate from D-glyceraldehyde 3-phosphate and pyruvate: step 1/1. In terms of biological role, catalyzes the acyloin condensation reaction between C atoms 2 and 3 of pyruvate and glyceraldehyde 3-phosphate to yield 1-deoxy-D-xylulose-5-phosphate (DXP). The polypeptide is 1-deoxy-D-xylulose-5-phosphate synthase (Corynebacterium diphtheriae (strain ATCC 700971 / NCTC 13129 / Biotype gravis)).